A 125-amino-acid chain; its full sequence is Large ribosomal subunit protein bL20 (125 aa).

Belongs to the bacterial ribosomal protein bL20 family.

Binds directly to 23S ribosomal RNA and is necessary for the in vitro assembly process of the 50S ribosomal subunit. It is not involved in the protein synthesizing functions of that subunit. In Rhodospirillum rubrum (strain ATCC 11170 / ATH 1.1.1 / DSM 467 / LMG 4362 / NCIMB 8255 / S1), this protein is Large ribosomal subunit protein bL20.